Consider the following 439-residue polypeptide: Cytochrome b-c1 complex reductase subunit, mitochondrial (439 aa).

The transit peptide at 1-17 (MIRGSSALKSLTSRRLY) directs the protein to the mitochondrion.

It belongs to the peptidase M16 family. UQCRC1/QCR1 subfamily. As to quaternary structure, component of the ubiquinol-cytochrome c oxidoreductase (cytochrome b-c1 complex, complex III, CIII), a multisubunit enzyme composed of 10 subunits. The complex is composed of 3 respiratory subunits cytochrome b (COB), cytochrome c1 (CYT1) and Rieske protein (RIP1), 2 core protein subunits COR1 and QCR2, and 5 low-molecular weight protein subunits QCR6, QCR7, QCR8, QCR9 and QCR10. The complex exists as an obligatory dimer and forms supercomplexes (SCs) in the inner mitochondrial membrane with a monomer or a dimer of cytochrome c oxidase (complex IV, CIV), resulting in 2 different assemblies (supercomplexes III(2)IV and III(2)IV(2)).

The protein resides in the mitochondrion inner membrane. Its function is as follows. Component of the ubiquinol-cytochrome c oxidoreductase, a multisubunit transmembrane complex that is part of the mitochondrial electron transport chain which drives oxidative phosphorylation. The complex plays an important role in the uptake of multiple carbon sources present in different host niches. This Candida albicans (strain SC5314 / ATCC MYA-2876) (Yeast) protein is Cytochrome b-c1 complex reductase subunit, mitochondrial.